The sequence spans 423 residues: Diels-Alderase pyiF (423 aa).

A signal peptide spans 1–17 (MLPSFIFVYSLLATATA). N-linked (GlcNAc...) asparagine glycosylation is found at Asn60, Asn92, and Asn219.

The protein belongs to the Diels-Alderase family.

Its pathway is mycotoxin biosynthesis. In terms of biological role, diels-Alderase; part of the gene cluster that mediates the biosynthesis of the mycotoxin pyrichalasin H, a tyrosine-derived cytochalasan that inhibits the growth of rice seedlings, but also inhibits lymphocyte capping and actin polymerization and alters cell morphology. Pyrichalasin H is indicated as the responsible agent for the genus-specific pathogenicity of M.grisea toward crabgrass. The first step in the pathway is catalyzed by the O-methyltransferase pyiA which methylates free tyrosine to generate the precursor O-methyltyrosine. The hybrid PKS-NRPS pyiS, assisted by the enoyl reductase pyiC, are responsible for fusion of the O-methyltyrosine precursor and the polyketide backbone. The polyketide synthase module (PKS) of pyiS is responsible for the synthesis of the polyketide backbone and the downstream nonribosomal peptide synthetase (NRPS) amidates the carboxyl end of the polyketide with the O-methyltyrosine precursor. As the NRPS A-domain demonstrates substrate tolerance, pyiS can also use phenylalanine, tyrosine and even para-chlorophenylalanine as amino acid precursor, which leads to the production of novel cytochalasans, including halogenated cytochalasans. Because pyiS lacks a designated enoylreductase (ER) domain, the required activity is provided the enoyl reductase pyiC. Reduction by the hydrolyase pyiE leads to 1,5-dihydropyrrolone, which is substrate for dehydration and intra-molecular Diels-Alder cyclization by the Diels-Alderase pyiF to yield the required isoindolone-fused macrocycle. The tailoring cytochrome P450 monooxygenases piyD and piyG catalyze the hydroxylation at C-18 and C-7, respectivily, whereas the short-chain dehydrogenase/reductase pyiH reduces the carbonyl at C-21 in preparation for the transfer of an acetyl group by the acetyltransferase pyiB. These 3 reactions whose order is not clear yet, lead to the production of O-methylpyrichalasin J, a deacetylated pyrichalasin H. Finally, pyiB to converts O-methylpyrichalasin J into the final product pyrichalasin H via acetylation of C-21. The protein is Diels-Alderase pyiF of Pyricularia grisea (Crabgrass-specific blast fungus).